The chain runs to 204 residues: MQRFFHFLVWSLTSSATFVFIGILSFFGLNQSIFLSIVYGLASGAAVYIAGIWNARRLFLKKHELTGREYAYIKKNLEEARQKMVRLRKALFQAKSIQMFKQNAEMLRIVRRIYLLTKKEPKRFYQAERFFYQTLDSVVELTEKYAFLSSHPKKSKELSMSLSETRITLTELTKRLEEDLTQAMGDEIDELQFELDAAKHSLKK.

Functionally, in double copy it causes aberrant cell morphology, filamentation and inhibits sporulation. Hydrolyzes 5-bromo-4-chloroindolyl phosphate. In Bacillus subtilis (strain 168), this protein is Protein XpaC (xpaC).